The primary structure comprises 383 residues: Phospho-N-acetylmuramoyl-pentapeptide-transferase (383 aa).

9 helical membrane-spanning segments follow: residues 26–46, 73–93, 98–118, 131–151, 182–202, 221–241, 258–278, 283–305, and 360–380; these read TAGA…GVIE, TMGG…WAEL, IILL…DDFL, IYKI…LYYF, IFLP…IPFA, GLAI…SYVS, AGEV…FLWF, AQVF…IALF, and QVVF…IATL.

The protein belongs to the glycosyltransferase 4 family. MraY subfamily. The cofactor is Mg(2+).

It localises to the cell inner membrane. The enzyme catalyses UDP-N-acetyl-alpha-D-muramoyl-L-alanyl-gamma-D-glutamyl-meso-2,6-diaminopimeloyl-D-alanyl-D-alanine + di-trans,octa-cis-undecaprenyl phosphate = di-trans,octa-cis-undecaprenyl diphospho-N-acetyl-alpha-D-muramoyl-L-alanyl-D-glutamyl-meso-2,6-diaminopimeloyl-D-alanyl-D-alanine + UMP. It functions in the pathway cell wall biogenesis; peptidoglycan biosynthesis. Functionally, catalyzes the initial step of the lipid cycle reactions in the biosynthesis of the cell wall peptidoglycan: transfers peptidoglycan precursor phospho-MurNAc-pentapeptide from UDP-MurNAc-pentapeptide onto the lipid carrier undecaprenyl phosphate, yielding undecaprenyl-pyrophosphoryl-MurNAc-pentapeptide, known as lipid I. This is Phospho-N-acetylmuramoyl-pentapeptide-transferase from Brachyspira hyodysenteriae (strain ATCC 49526 / WA1).